Consider the following 316-residue polypeptide: Transaldolase (316 aa).

The active-site Schiff-base intermediate with substrate is the Lys-127.

It belongs to the transaldolase family. Type 2 subfamily.

Its subcellular location is the cytoplasm. It catalyses the reaction D-sedoheptulose 7-phosphate + D-glyceraldehyde 3-phosphate = D-erythrose 4-phosphate + beta-D-fructose 6-phosphate. It participates in carbohydrate degradation; pentose phosphate pathway; D-glyceraldehyde 3-phosphate and beta-D-fructose 6-phosphate from D-ribose 5-phosphate and D-xylulose 5-phosphate (non-oxidative stage): step 2/3. Its function is as follows. Transaldolase is important for the balance of metabolites in the pentose-phosphate pathway. The protein is Transaldolase of Helicobacter pylori (strain HPAG1).